We begin with the raw amino-acid sequence, 475 residues long: Adenosylhomocysteinase (475 aa).

Substrate-binding residues include Thr-60, Asp-133, and Glu-198. 199–201 (TTT) is an NAD(+) binding site. Substrate-binding residues include Lys-228 and Asp-232. NAD(+) contacts are provided by residues Asn-233, 262–267 (GYGDVG), Glu-285, Asn-320, 341–343 (IGH), and Asn-389.

Belongs to the adenosylhomocysteinase family. Requires NAD(+) as cofactor.

Its subcellular location is the cytoplasm. It catalyses the reaction S-adenosyl-L-homocysteine + H2O = L-homocysteine + adenosine. It participates in amino-acid biosynthesis; L-homocysteine biosynthesis; L-homocysteine from S-adenosyl-L-homocysteine: step 1/1. Functionally, may play a key role in the regulation of the intracellular concentration of adenosylhomocysteine. The sequence is that of Adenosylhomocysteinase from Syntrophotalea carbinolica (strain DSM 2380 / NBRC 103641 / GraBd1) (Pelobacter carbinolicus).